The primary structure comprises 187 residues: Dihydrofolate reductase (187 aa).

Positions 4–185 constitute a DHFR domain; it reads PLNCIVAVSQ…IKYKFEVYEK (182 aa). NADP(+) contacts are provided by residues Ala10 and 16–22; that span reads GIGKNGD. 31–36 is a substrate binding site; that stretch reads EFKYFQ. Lys33 is subject to N6-acetyllysine; alternate. An N6-succinyllysine; alternate modification is found at Lys33. 55-57 contributes to the NADP(+) binding site; it reads RKT. Substrate-binding residues include Asn65 and Arg71. Residues 77-79 and 117-124 each bind NADP(+); these read SRE and GGSSVYQE.

This sequence belongs to the dihydrofolate reductase family. As to quaternary structure, homodimer.

Its subcellular location is the mitochondrion. It is found in the cytoplasm. The catalysed reaction is (6S)-5,6,7,8-tetrahydrofolate + NADP(+) = 7,8-dihydrofolate + NADPH + H(+). Its pathway is cofactor biosynthesis; tetrahydrofolate biosynthesis; 5,6,7,8-tetrahydrofolate from 7,8-dihydrofolate: step 1/1. Functionally, key enzyme in folate metabolism. Contributes to the de novo mitochondrial thymidylate biosynthesis pathway. Catalyzes an essential reaction for de novo glycine and purine synthesis, and for DNA precursor synthesis. Binds its own mRNA. The polypeptide is Dihydrofolate reductase (Dhfr) (Mus musculus (Mouse)).